The primary structure comprises 230 residues: PKHD-type hydroxylase XF_0598 (230 aa).

Positions 78-182 (RTLPPRFNCY…RIASFFWVQS (105 aa)) constitute a Fe2OG dioxygenase domain. Positions 96, 98, and 163 each coordinate Fe cation. Arg173 serves as a coordination point for 2-oxoglutarate.

Fe(2+) is required as a cofactor. Requires L-ascorbate as cofactor.

This Xylella fastidiosa (strain 9a5c) protein is PKHD-type hydroxylase XF_0598.